We begin with the raw amino-acid sequence, 544 residues long: Methionine--tRNA ligase 1 (544 aa).

Positions 10–20 (PYANGSLHLGH) match the 'HIGH' region motif. Positions 141, 144, 153, and 156 each coordinate Zn(2+). The 'KMSKS' region motif lies at 329–333 (KLSTS). ATP is bound at residue T332.

The protein belongs to the class-I aminoacyl-tRNA synthetase family. MetG type 1 subfamily. In terms of assembly, monomer. Zn(2+) serves as cofactor.

It localises to the cytoplasm. The enzyme catalyses tRNA(Met) + L-methionine + ATP = L-methionyl-tRNA(Met) + AMP + diphosphate. Its function is as follows. Is required not only for elongation of protein synthesis but also for the initiation of all mRNA translation through initiator tRNA(fMet) aminoacylation. This is Methionine--tRNA ligase 1 from Bacillus cereus (strain ATCC 10987 / NRS 248).